The following is a 147-amino-acid chain: Hemoglobin larval subunit beta-1 (147 aa).

One can recognise a Globin domain in the interval His-3–Phe-147. Positions 64 and 93 each coordinate heme b.

The protein belongs to the globin family. As to quaternary structure, heterotetramer of two alpha chains and two beta chains. As to expression, red blood cells.

Its function is as follows. This is a larval (tadpole) beta-globin. The sequence is that of Hemoglobin larval subunit beta-1 from Xenopus laevis (African clawed frog).